We begin with the raw amino-acid sequence, 122 residues long: Riboflavin kinase (122 aa).

Position 4 to 9 (4 to 9 (GFGEGA)) interacts with CDP. 2 residues coordinate Mg(2+): threonine 33 and asparagine 35. FMN-binding residues include threonine 84 and glutamate 92. 97–100 (VNLR) lines the CDP pocket.

This sequence belongs to the archaeal riboflavin kinase family. It depends on Mg(2+) as a cofactor.

It carries out the reaction riboflavin + CTP = CDP + FMN + H(+). Its pathway is cofactor biosynthesis; FMN biosynthesis; FMN from riboflavin (CTP route): step 1/1. Functionally, catalyzes the CTP-dependent phosphorylation of riboflavin (vitamin B2) to form flavin mononucleotide (FMN). This is Riboflavin kinase from Methanothermobacter thermautotrophicus (strain ATCC 29096 / DSM 1053 / JCM 10044 / NBRC 100330 / Delta H) (Methanobacterium thermoautotrophicum).